The sequence spans 147 residues: Nucleoside diphosphate kinase (147 aa).

The ATP site is built by Lys-9, Phe-57, Arg-85, Thr-91, Arg-102, and Asn-112. Residue His-115 is the Pros-phosphohistidine intermediate of the active site.

This sequence belongs to the NDK family. It depends on Mg(2+) as a cofactor.

The protein resides in the cytoplasm. The catalysed reaction is a 2'-deoxyribonucleoside 5'-diphosphate + ATP = a 2'-deoxyribonucleoside 5'-triphosphate + ADP. It carries out the reaction a ribonucleoside 5'-diphosphate + ATP = a ribonucleoside 5'-triphosphate + ADP. Its function is as follows. Major role in the synthesis of nucleoside triphosphates other than ATP. The ATP gamma phosphate is transferred to the NDP beta phosphate via a ping-pong mechanism, using a phosphorylated active-site intermediate. The sequence is that of Nucleoside diphosphate kinase from Ignicoccus hospitalis (strain KIN4/I / DSM 18386 / JCM 14125).